Here is a 182-residue protein sequence, read N- to C-terminus: Adenylate kinase (182 aa).

G12–T17 lines the ATP pocket. The segment at S32 to V61 is NMP. AMP-binding positions include T33, R38, E59–V61, G85–R88, and Q92. The LID stretch occupies residues L126–D132. R127 is a binding site for ATP. AMP contacts are provided by R129 and R140. R168 contacts ATP.

The protein belongs to the adenylate kinase family. Monomer.

The protein localises to the cytoplasm. The enzyme catalyses AMP + ATP = 2 ADP. It participates in purine metabolism; AMP biosynthesis via salvage pathway; AMP from ADP: step 1/1. Functionally, catalyzes the reversible transfer of the terminal phosphate group between ATP and AMP. Plays an important role in cellular energy homeostasis and in adenine nucleotide metabolism. This Prochlorococcus marinus (strain MIT 9301) protein is Adenylate kinase.